The primary structure comprises 635 residues: Ankyrin repeat and SOCS box protein 2 (635 aa).

A required for FLNA degradation region spans residues 8–16; the sequence is RGSQCTIGQ. Positions 26-45 constitute a UIM domain; the sequence is SEDELVQMAIEQSLADKTRG. ANK repeat units lie at residues 104-133, 137-167, 171-200, 204-233, 237-266, 270-299, 303-332, 336-365, 368-397, 410-439, 440-469, and 476-504; these read APAD…NLAE, EGWL…TIDQ, QEET…EPDI, SRET…DTNH, RGWT…KVES, YGIT…DINT, DNAS…DANK, DGLL…RTRI, SGVS…DVNT, RRSS…DPNR, DVIS…NIDA, and TAFP…DGEP. Ser-371 is subject to Phosphoserine; by MAPK. Positions 586–635 constitute an SOCS box domain; it reads IKEKAEPPRPLAHLCRLRVRKAIGKYRIKLLDTLPLPGRLIRYLKYENTQ.

This sequence belongs to the ankyrin SOCS box (ASB) family. Component of a probable ECS E3 ubiquitin-protein ligase complex which contains CUL5, either RBX1 or RNF7/RBX2, Elongin BC complex (ELOB and ELOC) and ASB2. Interacts with SKP2. Through its interaction with SKP2, likely to bridge the formation of dimeric E3-ubiquitin-protein ligase complexes composed of an ECS complex and an SCF(SKP2) complex. Interacts with JAK2; the interaction targets JAK2 for Notch-mediated proteasomal degradation. Interacts with TCF3/E2A; the interaction is mediated by SKP2 and targets TCF3 for Notch-mediated proteasomal degradation. As to quaternary structure, interacts with DES. Post-translationally, monoubiquitinated. In terms of processing, not monoubiquitinated. Phosphorylation at Ser-371 is required for association with FLNA and subsequent FLNA degradation. In terms of tissue distribution, expressed in muscle cells. Expressed in hematopoietic cells.

It is found in the cytoplasm. The protein localises to the cytoskeleton. Its subcellular location is the stress fiber. It localises to the myofibril. The protein resides in the sarcomere. It is found in the z line. The protein operates within protein modification; protein ubiquitination. Its function is as follows. Substrate-recognition component of a SCF-like ECS (Elongin-Cullin-SOCS-box protein) E3 ubiquitin-protein ligase complex which mediates the ubiquitination and subsequent proteasomal degradation of target proteins. Mediates Notch-induced ubiquitination and degradation of substrates including TCF3/E2A and JAK2. Required during embryonic heart development for complete heart looping. Required for cardiomyocyte differentiation. Specifically promotes the ubiquitination of SMAD9 and targets it for proteasomal degradation, leading to avoid excessive accumulation of SMAD9. Plays a role in the regulation of NK-cell migration by modulating protein levels of filamin A/FLNA via regulation of its ubiquitination and proteasome degradation. Involved in myogenic differentiation and targets filamin FLNB for proteasomal degradation but not filamin FLNA. Also targets DES for proteasomal degradation. Acts as a negative regulator of skeletal muscle mass. In terms of biological role, targets filamins FLNA and FLNB for proteasomal degradation. This leads to enhanced adhesion of hematopoietic cells to fibronectin. Required for FLNA degradation in immature cardiomyocytes which is necessary for actin cytoskeleton remodeling, leading to proper organization of myofibrils and function of mature cardiomyocytes. Required for degradation of FLNA and FLNB in immature dendritic cells (DC) which enhances immature DC migration by promoting DC podosome formation and DC-mediated degradation of the extracellular matrix. Does not promote proteasomal degradation of tyrosine-protein kinases JAK1 or JAK2 in hematopoietic cells. This chain is Ankyrin repeat and SOCS box protein 2 (ASB2), found in Homo sapiens (Human).